The following is a 430-amino-acid chain: Serine hydroxymethyltransferase 2 (430 aa).

Residues Leu-128 and 132-134 (GHL) each bind (6S)-5,6,7,8-tetrahydrofolate. Lys-237 is modified (N6-(pyridoxal phosphate)lysine).

The protein belongs to the SHMT family. In terms of assembly, homodimer. Pyridoxal 5'-phosphate serves as cofactor.

The protein resides in the cytoplasm. The catalysed reaction is (6R)-5,10-methylene-5,6,7,8-tetrahydrofolate + glycine + H2O = (6S)-5,6,7,8-tetrahydrofolate + L-serine. The protein operates within one-carbon metabolism; tetrahydrofolate interconversion. Its pathway is amino-acid biosynthesis; glycine biosynthesis; glycine from L-serine: step 1/1. In terms of biological role, catalyzes the reversible interconversion of serine and glycine with tetrahydrofolate (THF) serving as the one-carbon carrier. This reaction serves as the major source of one-carbon groups required for the biosynthesis of purines, thymidylate, methionine, and other important biomolecules. Also exhibits THF-independent aldolase activity toward beta-hydroxyamino acids, producing glycine and aldehydes, via a retro-aldol mechanism. The polypeptide is Serine hydroxymethyltransferase 2 (Rhodospirillum rubrum (strain ATCC 11170 / ATH 1.1.1 / DSM 467 / LMG 4362 / NCIMB 8255 / S1)).